The sequence spans 2568 residues: Highly reducing polyketide synthase resH (2568 aa).

One can recognise a Ketosynthase family 3 (KS3) domain in the interval 9–437; it reads PEPIAIVGMA…GANAHAILDA (429 aa). Active-site for beta-ketoacyl synthase activity residues include Cys-184, His-319, and His-359. The 329-residue stretch at 549 to 877 folds into the Malonyl-CoA:ACP transacylase (MAT) domain; sequence FIFTGQGAQW…KLAGSLFLSG (329 aa). The interval 942–1081 is N-terminal hotdog fold; the sequence is HDLLGSRLPG…TNDQLLWPDD (140 aa). A PKS/mFAS DH domain is found at 942–1244; that stretch reads HDLLGSRLPG…FSSLETASSD (303 aa). The active-site Proton acceptor; for dehydratase activity is the His-974. Residues 1091–1244 form a C-terminal hotdog fold region; sequence NKDSYDRRWY…FSSLETASSD (154 aa). The active-site Proton donor; for dehydratase activity is Asp-1156. Residues 1295-1595 are methyltransferase (CMet) domain; it reads VTRLAIRSSA…SGADVVLDDY (301 aa). An Enoyl reductase (ER) domain is found at 1853-2154; the sequence is GRLDSFYFKE…QEDSVGLAVL (302 aa). The region spanning 2177–2357 is the Ketoreductase (KR) domain; it reads ASYLLIGCLG…QATSIALGMI (181 aa). Residues 2485-2563 form the Carrier domain; sequence AVKSAILGLI…GLADQVVSLA (79 aa). Ser-2522 carries the post-translational modification O-(pantetheine 4'-phosphoryl)serine.

Pantetheine 4'-phosphate is required as a cofactor.

It functions in the pathway antifungal biosynthesis. Highly reducing polyketide synthase; part of the gene cluster that mediates the biosynthesis of the tetrahydropyranyl antifungal agent restricticin that acts as an inhibitor of CYP51 and blocks the ergosterol biosynthesis. The highly reducing polyketide synthase resH, the short chain dehydrogenase resG, the cyclase resF, the FAD-dependent monooxygenase resA and the enoylreductase resD are required to generate the first stable intermediate desmethylrestrictinol. ResH with resD biosynthesize the first polyketide chain intermediate that is reduced by resG, followed by epoxidation by resA before 6-endo cyclization via epoxide opening by resF leads to desmethylrestrictinol. The methyltransferase resE then catalyzes the C4 O-methylation of desmethylrestrictinol to produce restrictinol, and the nonribosomal peptide synthetase resC catalyzes the C3 esterification of restrictinol with glycine that leads to restricticin. The polypeptide is Highly reducing polyketide synthase resH (Aspergillus sclerotiorum).